We begin with the raw amino-acid sequence, 45 residues long: Photosystem II reaction center protein K (45 aa).

A propeptide spanning residues 1 to 8 (MNSALFLA) is cleaved from the precursor. Residues 23 to 43 (ILPVIPVFFLLLAFVWQAAIG) form a helical membrane-spanning segment.

This sequence belongs to the PsbK family. As to quaternary structure, PSII is composed of 1 copy each of membrane proteins PsbA, PsbB, PsbC, PsbD, PsbE, PsbF, PsbH, PsbI, PsbJ, PsbK, PsbL, PsbM, PsbT, PsbX, PsbY, PsbZ, Psb30/Ycf12, at least 3 peripheral proteins of the oxygen-evolving complex and a large number of cofactors. It forms dimeric complexes.

The protein localises to the plastid. It is found in the chloroplast thylakoid membrane. In terms of biological role, one of the components of the core complex of photosystem II (PSII). PSII is a light-driven water:plastoquinone oxidoreductase that uses light energy to abstract electrons from H(2)O, generating O(2) and a proton gradient subsequently used for ATP formation. It consists of a core antenna complex that captures photons, and an electron transfer chain that converts photonic excitation into a charge separation. The protein is Photosystem II reaction center protein K of Pyropia yezoensis (Susabi-nori).